We begin with the raw amino-acid sequence, 327 residues long: Dipeptide transport ATP-binding protein DppD (327 aa).

The ABC transporter domain occupies 4-254 (LNVDKLSVHF…PRHPYTQALL (251 aa)). Position 40-47 (40-47 (GESGSGKS)) interacts with ATP.

The protein belongs to the ABC transporter superfamily. In terms of assembly, the complex is composed of two ATP-binding proteins (DppD and DppF), two transmembrane proteins (DppB and DppC) and a solute-binding protein (DppA). MppA can replace DppA as binding protein for heme and ALA transport.

The protein resides in the cell inner membrane. The catalysed reaction is a dipeptide(out) + ATP + H2O = a dipeptide(in) + ADP + phosphate + H(+). Its function is as follows. Part of the ABC transporter DppABCDF involved in dipeptide transport. Responsible for energy coupling to the transport system. In terms of biological role, when a foreign outer membrane heme receptor is expressed in E.coli, DppABCDF can also transport heme and its precursor, 5-aminolevulinic acid (ALA), from the periplasm into the cytoplasm. In Escherichia coli (strain K12), this protein is Dipeptide transport ATP-binding protein DppD (dppD).